The following is a 229-amino-acid chain: Protein FAM3C (229 aa).

Residues 1 to 24 (MRIAGAIKFVVAVALFLLTFYVIS) form the signal peptide. Intrachain disulfides connect Cys-59–Cys-87 and Cys-65–Cys-222. The GG-type lectin domain occupies 68-226 (KHFAFKIASG…VEMEGCIPQK (159 aa)).

This sequence belongs to the FAM3 family. In terms of tissue distribution, expressed in the retinal ganglion cell layer.

The protein localises to the secreted. Involved in retinal laminar formation. The chain is Protein FAM3C (fam3c) from Xenopus laevis (African clawed frog).